The chain runs to 78 residues: Major outer membrane lipoprotein Lpp (78 aa).

An N-terminal signal peptide occupies residues M1–G20. The N-palmitoyl cysteine moiety is linked to residue C21. The S-diacylglycerol cysteine moiety is linked to residue C21. Repeats lie at residues N24–V34 and N38–V48. The stretch at I27–K75 forms a coiled coil. K78 is subject to N6-murein peptidoglycan lysine.

It belongs to the Lpp family. In terms of assembly, homotrimer.

Its subcellular location is the cell outer membrane. The protein resides in the secreted. The protein localises to the cell wall. Its function is as follows. A highly abundant outer membrane lipoprotein that controls the distance between the inner and outer membranes. The only protein known to be covalently linked to the peptidoglycan network (PGN). Also non-covalently binds the PGN. The link between the cell outer membrane and PGN contributes to maintenance of the structural and functional integrity of the cell envelope, and maintains the correct distance between the PGN and the outer membrane. This chain is Major outer membrane lipoprotein Lpp, found in Shigella flexneri.